We begin with the raw amino-acid sequence, 924 residues long: Inositol polyphosphate 4-phosphatase type II (924 aa).

Positions 1–13 (MEIKEEGASEEGQ) are enriched in basic and acidic residues. Disordered stretches follow at residues 1–24 (MEIK…ANDP), 481–516 (ILKK…HSDY), and 546–570 (DGGS…AIPS). The region spanning 23–165 (DPGDCQFTSI…LKSKEQLLVL (143 aa)) is the C2 domain.

This sequence belongs to the inositol 3,4-bisphosphate 4-phosphatase family. Widely expressed with highest levels occurring in the skeletal muscle and heart.

It catalyses the reaction a 1,2-diacyl-sn-glycero-3-phospho-(1D-myo-inositol-3,4-bisphosphate) + H2O = a 1,2-diacyl-sn-glycero-3-phospho-(1D-myo-inositol-3-phosphate) + phosphate. The catalysed reaction is 1D-myo-inositol 1,3,4-trisphosphate + H2O = 1D-myo-inositol 1,3-bisphosphate + phosphate. The enzyme catalyses 1D-myo-inositol 3,4-bisphosphate + H2O = 1D-myo-inositol 3-phosphate + phosphate. It participates in signal transduction; phosphatidylinositol signaling pathway. Its activity is regulated as follows. Strongly inhibited by inositol hexakisphosphate. In terms of biological role, catalyzes the hydrolysis of the 4-position phosphate of phosphatidylinositol 3,4-bisphosphate, inositol 1,3,4-trisphosphate and inositol 3,4-trisphosphate. Plays a role in the late stages of macropinocytosis by dephosphorylating phosphatidylinositol 3,4-bisphosphate in membrane ruffles. The lipid phosphatase activity is critical for tumor suppressor function. Antagonizes the PI3K-AKT/PKB signaling pathway by dephosphorylating phosphoinositides and thereby modulating cell cycle progression and cell survival. The sequence is that of Inositol polyphosphate 4-phosphatase type II (INPP4B) from Homo sapiens (Human).